A 314-amino-acid chain; its full sequence is Serine/threonine-protein phosphatase PP2A-4 catalytic subunit (314 aa).

Residues aspartate 62, histidine 64, aspartate 90, and asparagine 122 each contribute to the Mn(2+) site. Catalysis depends on histidine 123, which acts as the Proton donor. Histidine 172 and histidine 246 together coordinate Mn(2+).

It belongs to the PPP phosphatase family. PP-2A subfamily. The cofactor is Mn(2+).

The protein resides in the cytoplasm. The catalysed reaction is O-phospho-L-seryl-[protein] + H2O = L-seryl-[protein] + phosphate. It carries out the reaction O-phospho-L-threonyl-[protein] + H2O = L-threonyl-[protein] + phosphate. The sequence is that of Serine/threonine-protein phosphatase PP2A-4 catalytic subunit (PP2A4) from Oryza sativa subsp. japonica (Rice).